The chain runs to 634 residues: Chaperone protein DnaK (634 aa).

T193 bears the Phosphothreonine; by autocatalysis mark. The interval 597 to 634 is disordered; sequence GNANNTSSTESTTTNNNNEEDSKVVDSDYQEIDKKDGK. Low complexity predominate over residues 600–613; it reads NNTSSTESTTTNNN. Basic and acidic residues predominate over residues 616–634; it reads EDSKVVDSDYQEIDKKDGK.

It belongs to the heat shock protein 70 family.

Its function is as follows. Acts as a chaperone. The chain is Chaperone protein DnaK from Ehrlichia canis (strain Jake).